The sequence spans 318 residues: NADH-ubiquinone oxidoreductase chain 1 (318 aa).

Helical transmembrane passes span 2–22 (FLIN…FLTL), 69–89 (FLFT…WAPL), 102–122 (LLFI…SGWA), 146–166 (MTTI…TAFA), 171–191 (HLWL…STLA), 222–242 (LFFM…VILF), 253–273 (EIST…FLWV), and 294–314 (LPLT…LACI).

Belongs to the complex I subunit 1 family. As to quaternary structure, core subunit of respiratory chain NADH dehydrogenase (Complex I) which is composed of 45 different subunits.

It localises to the mitochondrion inner membrane. It carries out the reaction a ubiquinone + NADH + 5 H(+)(in) = a ubiquinol + NAD(+) + 4 H(+)(out). Core subunit of the mitochondrial membrane respiratory chain NADH dehydrogenase (Complex I) which catalyzes electron transfer from NADH through the respiratory chain, using ubiquinone as an electron acceptor. Essential for the catalytic activity and assembly of complex I. The chain is NADH-ubiquinone oxidoreductase chain 1 (MT-ND1) from Elephas maximus (Indian elephant).